The chain runs to 297 residues: Phosphatidylglycerol--prolipoprotein diacylglyceryl transferase (297 aa).

3 helical membrane-spanning segments follow: residues 17 to 37, 59 to 79, and 97 to 117; these read LAVR…IVVG, MLFY…VLFY, and GGMS…LFAW. A 1,2-diacyl-sn-glycero-3-phospho-(1'-sn-glycerol) is bound at residue R142. 2 consecutive transmembrane segments (helical) span residues 230-250 and 257-277; these read MGAV…TVEF and FLGL…PMIV.

The protein belongs to the Lgt family.

The protein resides in the cell inner membrane. The catalysed reaction is L-cysteinyl-[prolipoprotein] + a 1,2-diacyl-sn-glycero-3-phospho-(1'-sn-glycerol) = an S-1,2-diacyl-sn-glyceryl-L-cysteinyl-[prolipoprotein] + sn-glycerol 1-phosphate + H(+). The protein operates within protein modification; lipoprotein biosynthesis (diacylglyceryl transfer). Its function is as follows. Catalyzes the transfer of the diacylglyceryl group from phosphatidylglycerol to the sulfhydryl group of the N-terminal cysteine of a prolipoprotein, the first step in the formation of mature lipoproteins. This Burkholderia multivorans (strain ATCC 17616 / 249) protein is Phosphatidylglycerol--prolipoprotein diacylglyceryl transferase.